The primary structure comprises 179 residues: Large ribosomal subunit protein uL5 (179 aa).

Belongs to the universal ribosomal protein uL5 family. Part of the 50S ribosomal subunit; part of the 5S rRNA/L5/L18/L25 subcomplex. Contacts the 5S rRNA and the P site tRNA. Forms a bridge to the 30S subunit in the 70S ribosome.

Functionally, this is one of the proteins that bind and probably mediate the attachment of the 5S RNA into the large ribosomal subunit, where it forms part of the central protuberance. In the 70S ribosome it contacts protein S13 of the 30S subunit (bridge B1b), connecting the 2 subunits; this bridge is implicated in subunit movement. Contacts the P site tRNA; the 5S rRNA and some of its associated proteins might help stabilize positioning of ribosome-bound tRNAs. This Shewanella putrefaciens (strain CN-32 / ATCC BAA-453) protein is Large ribosomal subunit protein uL5.